We begin with the raw amino-acid sequence, 123 residues long: Methicillin resistance regulatory protein MecI (123 aa).

Residues 7 to 71 (EISSAEWEVM…KDNKIFQYYS (65 aa)) constitute a DNA-binding region (H-T-H motif). The interval 74–123 (EESDIKYKTSKNFINKVYKGGFNSLVLNFVEKEDLSQDEIEELRNILNKK) is important for dimerization.

The protein belongs to the BlaI transcriptional regulatory family. Monomer and homodimer. Upon exposure to beta-lactams, proteolytic cleavage at a single site impairs dimerization and abolishes repressor activity.

The protein resides in the cytoplasm. Functionally, transcriptional repressor that constitutively blocks the transcription of the gene for the penicillin-binding protein MecA. Binds DNA as a dimer. This chain is Methicillin resistance regulatory protein MecI (mecI), found in Mammaliicoccus sciuri (Staphylococcus sciuri).